The following is a 335-amino-acid chain: Glycerol-3-phosphate dehydrogenase [NAD(P)+] (335 aa).

W12 and K106 together coordinate NADPH. Residues K106, G136, and S138 each contribute to the sn-glycerol 3-phosphate site. A140 contributes to the NADPH binding site. The sn-glycerol 3-phosphate site is built by K191, D244, S254, R255, and N256. K191 functions as the Proton acceptor in the catalytic mechanism. R255 contacts NADPH. Positions 279 and 281 each coordinate NADPH.

Belongs to the NAD-dependent glycerol-3-phosphate dehydrogenase family.

The protein localises to the cytoplasm. It catalyses the reaction sn-glycerol 3-phosphate + NAD(+) = dihydroxyacetone phosphate + NADH + H(+). It carries out the reaction sn-glycerol 3-phosphate + NADP(+) = dihydroxyacetone phosphate + NADPH + H(+). Its pathway is membrane lipid metabolism; glycerophospholipid metabolism. Its function is as follows. Catalyzes the reduction of the glycolytic intermediate dihydroxyacetone phosphate (DHAP) to sn-glycerol 3-phosphate (G3P), the key precursor for phospholipid synthesis. The chain is Glycerol-3-phosphate dehydrogenase [NAD(P)+] from Fusobacterium nucleatum subsp. nucleatum (strain ATCC 25586 / DSM 15643 / BCRC 10681 / CIP 101130 / JCM 8532 / KCTC 2640 / LMG 13131 / VPI 4355).